We begin with the raw amino-acid sequence, 313 residues long: D-apiose import binding protein (313 aa).

An N-terminal signal peptide occupies residues 1–26; that stretch reads MKLTRRLTLAAFASVLALGTAAPAFS. Residues N39, 115–116, 162–164, R168, N218, D243, and Q263 each bind D-apiofuranose; these read DR and DTN.

This sequence belongs to the bacterial solute-binding protein 2 family.

The protein localises to the periplasm. Functionally, part of an ABC transporter complex involved in D-apiose import. The polypeptide is D-apiose import binding protein (Rhizobium rhizogenes (strain K84 / ATCC BAA-868) (Agrobacterium radiobacter)).